The following is a 311-amino-acid chain: Aspartate carbamoyltransferase catalytic subunit (311 aa).

Residues Arg-58 and Thr-59 each contribute to the carbamoyl phosphate site. An L-aspartate-binding site is contributed by Lys-86. Residues Arg-108, His-136, and Gln-139 each contribute to the carbamoyl phosphate site. Positions 169 and 223 each coordinate L-aspartate. Carbamoyl phosphate is bound by residues Gly-264 and Pro-265.

This sequence belongs to the aspartate/ornithine carbamoyltransferase superfamily. ATCase family. Heterododecamer (2C3:3R2) of six catalytic PyrB chains organized as two trimers (C3), and six regulatory PyrI chains organized as three dimers (R2).

It catalyses the reaction carbamoyl phosphate + L-aspartate = N-carbamoyl-L-aspartate + phosphate + H(+). It participates in pyrimidine metabolism; UMP biosynthesis via de novo pathway; (S)-dihydroorotate from bicarbonate: step 2/3. In terms of biological role, catalyzes the condensation of carbamoyl phosphate and aspartate to form carbamoyl aspartate and inorganic phosphate, the committed step in the de novo pyrimidine nucleotide biosynthesis pathway. This chain is Aspartate carbamoyltransferase catalytic subunit, found in Desulfosudis oleivorans (strain DSM 6200 / JCM 39069 / Hxd3) (Desulfococcus oleovorans).